We begin with the raw amino-acid sequence, 124 residues long: Protein MGF 110-4L (124 aa).

An N-terminal signal peptide occupies residues Met-1 to Arg-28. A glycan (N-linked (GlcNAc...) asparagine; by host) is linked at Asn-64. Positions Lys-121–Leu-124 match the Prevents secretion from ER motif.

It belongs to the asfivirus MGF 110 family.

It localises to the virion. The protein resides in the host endoplasmic reticulum-Golgi intermediate compartment. Its function is as follows. Causes the redistribution of lumenal ER protein to an enlarged ERGIC compartment. The sequence is that of Protein MGF 110-4L from Ornithodoros (relapsing fever ticks).